Consider the following 141-residue polypeptide: Large ribosomal subunit protein uL11 (141 aa).

The protein belongs to the universal ribosomal protein uL11 family. Part of the ribosomal stalk of the 50S ribosomal subunit. Interacts with L10 and the large rRNA to form the base of the stalk. L10 forms an elongated spine to which L12 dimers bind in a sequential fashion forming a multimeric L10(L12)X complex. Post-translationally, one or more lysine residues are methylated.

Forms part of the ribosomal stalk which helps the ribosome interact with GTP-bound translation factors. This is Large ribosomal subunit protein uL11 from Prochlorococcus marinus (strain MIT 9215).